Consider the following 428-residue polypeptide: 3-phosphoshikimate 1-carboxyvinyltransferase (428 aa).

Residues lysine 23, serine 24, and arginine 28 each contribute to the 3-phosphoshikimate site. Lysine 23 serves as a coordination point for phosphoenolpyruvate. Residues glycine 97 and arginine 125 each contribute to the phosphoenolpyruvate site. Residues serine 170, serine 171, glutamine 172, serine 198, aspartate 314, asparagine 338, and lysine 342 each contribute to the 3-phosphoshikimate site. Position 172 (glutamine 172) interacts with phosphoenolpyruvate. Catalysis depends on aspartate 314, which acts as the Proton acceptor. 3 residues coordinate phosphoenolpyruvate: arginine 346, arginine 388, and lysine 413.

The protein belongs to the EPSP synthase family. As to quaternary structure, monomer.

Its subcellular location is the cytoplasm. The enzyme catalyses 3-phosphoshikimate + phosphoenolpyruvate = 5-O-(1-carboxyvinyl)-3-phosphoshikimate + phosphate. It functions in the pathway metabolic intermediate biosynthesis; chorismate biosynthesis; chorismate from D-erythrose 4-phosphate and phosphoenolpyruvate: step 6/7. In terms of biological role, catalyzes the transfer of the enolpyruvyl moiety of phosphoenolpyruvate (PEP) to the 5-hydroxyl of shikimate-3-phosphate (S3P) to produce enolpyruvyl shikimate-3-phosphate and inorganic phosphate. In Baumannia cicadellinicola subsp. Homalodisca coagulata, this protein is 3-phosphoshikimate 1-carboxyvinyltransferase.